Consider the following 438-residue polypeptide: UPF0229 protein Smed_1028 (438 aa).

The segment at 55–107 (PARGVNEPAFQPDSNSGERRHVLPGNREFAAGDRIPKRGGGGGAGNAGAGTGQ) is disordered. Over residues 92 to 105 (RGGGGGAGNAGAGT) the composition is skewed to gly residues.

It belongs to the UPF0229 family.

This Sinorhizobium medicae (strain WSM419) (Ensifer medicae) protein is UPF0229 protein Smed_1028.